A 142-amino-acid polypeptide reads, in one-letter code: Type 3 secretion system pilotin (142 aa).

A signal peptide spans 1 to 23 (MIRHGSNKLKIFILSILLLTLSG). A lipid anchor (N-palmitoyl cysteine) is attached at Cys24. Cys24 is lipidated: S-diacylglycerol cysteine.

Belongs to the MxiM family. As to quaternary structure, monomer. Interacts with the secretin MxiD/SctC.

The protein localises to the cell outer membrane. Its function is as follows. Involved in the synthesis of the type III secretion system (T3SS), also called injectisome, which is used to inject bacterial effector proteins into eukaryotic host cells. Pilot protein that is required for the proper localization of the secretin MxiD/SctC in the outer membrane. Also influences both MxiD/SctC multimerization and stability. Required for both Ipa translocation and tissue culture cell invasion. Binds lipids. This chain is Type 3 secretion system pilotin, found in Shigella flexneri.